The following is a 234-amino-acid chain: 3,4-dihydroxy-2-butanone 4-phosphate synthase (234 aa).

D-ribulose 5-phosphate-binding positions include 39-40, D44, 152-156, and E176; these read RE and RRGHT. Mg(2+) is bound at residue E40. Mg(2+) is bound at residue H155.

It belongs to the DHBP synthase family. Homodimer. The cofactor is Mg(2+). Mn(2+) serves as cofactor.

The catalysed reaction is D-ribulose 5-phosphate = (2S)-2-hydroxy-3-oxobutyl phosphate + formate + H(+). It functions in the pathway cofactor biosynthesis; riboflavin biosynthesis; 2-hydroxy-3-oxobutyl phosphate from D-ribulose 5-phosphate: step 1/1. Functionally, catalyzes the conversion of D-ribulose 5-phosphate to formate and 3,4-dihydroxy-2-butanone 4-phosphate. In Pelobacter propionicus (strain DSM 2379 / NBRC 103807 / OttBd1), this protein is 3,4-dihydroxy-2-butanone 4-phosphate synthase.